A 750-amino-acid chain; its full sequence is Photosystem I P700 chlorophyll a apoprotein A1 (750 aa).

The next 8 membrane-spanning stretches (helical) occupy residues 70-93 (VFSA…FHGA), 156-179 (LYCT…FHYH), 195-219 (LNHH…HVSL), 291-309 (IAHH…GHMY), 346-369 (WHAQ…HHMY), 385-411 (LSLF…IFMV), 433-455 (AIIS…LYIH), and 531-549 (FLVH…LILL). Residues Cys573 and Cys582 each coordinate [4Fe-4S] cluster. The next 2 helical transmembrane spans lie at 589-610 (HVFL…HFSW) and 664-686 (LSAY…MFLF). His675 contacts chlorophyll a'. Chlorophyll a contacts are provided by Met683 and Tyr691. Trp692 serves as a coordination point for phylloquinone. A helical membrane pass occupies residues 724–744 (AVGVTHYLLGGIATTWAFFLA).

It belongs to the PsaA/PsaB family. As to quaternary structure, the PsaA/B heterodimer binds the P700 chlorophyll special pair and subsequent electron acceptors. PSI consists of a core antenna complex that captures photons, and an electron transfer chain that converts photonic excitation into a charge separation. The eukaryotic PSI reaction center is composed of at least 11 subunits. The cofactor is P700 is a chlorophyll a/chlorophyll a' dimer, A0 is one or more chlorophyll a, A1 is one or both phylloquinones and FX is a shared 4Fe-4S iron-sulfur center..

The protein localises to the plastid. Its subcellular location is the chloroplast thylakoid membrane. The catalysed reaction is reduced [plastocyanin] + hnu + oxidized [2Fe-2S]-[ferredoxin] = oxidized [plastocyanin] + reduced [2Fe-2S]-[ferredoxin]. Its function is as follows. PsaA and PsaB bind P700, the primary electron donor of photosystem I (PSI), as well as the electron acceptors A0, A1 and FX. PSI is a plastocyanin-ferredoxin oxidoreductase, converting photonic excitation into a charge separation, which transfers an electron from the donor P700 chlorophyll pair to the spectroscopically characterized acceptors A0, A1, FX, FA and FB in turn. Oxidized P700 is reduced on the lumenal side of the thylakoid membrane by plastocyanin. In Morus indica (Mulberry), this protein is Photosystem I P700 chlorophyll a apoprotein A1.